We begin with the raw amino-acid sequence, 511 residues long: Maturase K (511 aa).

Belongs to the intron maturase 2 family. MatK subfamily.

The protein resides in the plastid. Its subcellular location is the chloroplast. Functionally, usually encoded in the trnK tRNA gene intron. Probably assists in splicing its own and other chloroplast group II introns. This Phleum pratense (Common timothy) protein is Maturase K.